The following is a 290-amino-acid chain: Glycine--tRNA ligase alpha subunit (290 aa).

It belongs to the class-II aminoacyl-tRNA synthetase family. In terms of assembly, tetramer of two alpha and two beta subunits.

It localises to the cytoplasm. The enzyme catalyses tRNA(Gly) + glycine + ATP = glycyl-tRNA(Gly) + AMP + diphosphate. This is Glycine--tRNA ligase alpha subunit from Syntrophotalea carbinolica (strain DSM 2380 / NBRC 103641 / GraBd1) (Pelobacter carbinolicus).